The chain runs to 514 residues: 2,3-bisphosphoglycerate-independent phosphoglycerate mutase (514 aa).

Residues Asp14 and Ser64 each contribute to the Mn(2+) site. The active-site Phosphoserine intermediate is the Ser64. Substrate is bound by residues His125, 155-156 (RD), Arg187, Arg193, 263-266 (RADR), and Lys336. Mn(2+) is bound by residues Asp403, His407, Asp444, His445, and His463.

It belongs to the BPG-independent phosphoglycerate mutase family. In terms of assembly, monomer. Mn(2+) is required as a cofactor.

The catalysed reaction is (2R)-2-phosphoglycerate = (2R)-3-phosphoglycerate. The protein operates within carbohydrate degradation; glycolysis; pyruvate from D-glyceraldehyde 3-phosphate: step 3/5. In terms of biological role, catalyzes the interconversion of 2-phosphoglycerate and 3-phosphoglycerate. The protein is 2,3-bisphosphoglycerate-independent phosphoglycerate mutase of Shewanella sp. (strain ANA-3).